A 360-amino-acid chain; its full sequence is Inward rectifier potassium channel 13 (360 aa).

Over 1–50 (MDSRNCKVNAPLLSQRYRRMVTKDGHSTLQMDGAQRGLVYLRDAWGILMD) the chain is Cytoplasmic. The chain crosses the membrane as a helical span at residues 51-77 (MRWRWMMLVFSASFVVHWLVFAVLWYA). Residues 78 to 105 (VAEMNGDLEIDHDVPPENHTICVKHITS) are Extracellular-facing. Positions 106 to 122 (FTAAFSFSLETQLTIGY) form an intramembrane region, helical; Pore-forming. A Selectivity filter motif is present at residues 119–124 (TIGYGT). At 123 to 131 (GTMFPSGDC) the chain is on the extracellular side. A helical membrane pass occupies residues 132 to 157 (PSAIALLAIQMLLGLMLEAFITGAFV). Residues 158–360 (AKIARPKNRA…FQIAETGLTE (203 aa)) lie on the Cytoplasmic side of the membrane. Ser201 bears the Phosphoserine; by PKC mark. Ser287 carries the phosphoserine; by PKA modification.

The protein belongs to the inward rectifier-type potassium channel (TC 1.A.2.1) family. KCNJ13 subfamily. Homotetramer. Interacts with RAB28; the interaction may facilitate cone outer segments phagocytosis. In terms of processing, phosphorylation at Ser-201 by PKC strongly inhibits ionic currents, while phosphorylation at Ser-287 by PKA increases them.

Its subcellular location is the membrane. It localises to the cell membrane. It catalyses the reaction K(+)(in) = K(+)(out). Inhibited by Ba(2+) and Cs(+), although sensitivity to those inhibitors is much lower than in other Kir channels. Functionally, inward rectifier potassium channels are characterized by a greater tendency to allow potassium to flow into the cell rather than out of it. Their voltage dependence is regulated by the concentration of extracellular potassium; as external potassium is raised, the voltage range of the channel opening shifts to more positive voltages. The inward rectification is mainly due to the blockage of outward current by internal magnesium. KCNJ13 has a very low single channel conductance, low sensitivity to block by external barium and cesium, and no dependence of its inward rectification properties on the internal blocking particle magnesium. In Rattus norvegicus (Rat), this protein is Inward rectifier potassium channel 13 (Kcnj13).